We begin with the raw amino-acid sequence, 180 residues long: ADP-ribosylation factor 4 (180 aa).

A lipid anchor (N-myristoyl glycine) is attached at glycine 2. GTP contacts are provided by residues 24–31, 67–71, and 126–129; these read GLDAAGKT, DVGGQ, and NKQD. A Phosphoserine modification is found at serine 147.

It belongs to the small GTPase superfamily. Arf family. In terms of assembly, forms a complex containing RAB11A, ASAP1, RAB3IP, RAP11FIP3 and ARF4; the complex promotes preciliary trafficking; the complex binds to RHO in photoreceptor cells and promotes RHO ciliary transport.

It is found in the golgi apparatus. It localises to the membrane. Its function is as follows. GTP-binding protein that functions as an allosteric activator of the cholera toxin catalytic subunit, an ADP-ribosyltransferase. Involved in protein trafficking; may modulate vesicle budding and uncoating within the Golgi apparatus. Part of the ciliary targeting complex containing Rab11, ASAP1, Rabin8/RAB3IP, RAB11FIP3 and ARF4, which direct preciliary vesicle trafficking to mother centriole and ciliogenesis initiation. This is ADP-ribosylation factor 4 (ARF4) from Homo sapiens (Human).